The following is an 83-amino-acid chain: Cytochrome b559 subunit alpha (83 aa).

The helical transmembrane segment at 21–35 (VIHSITIPSLFIAGW) threads the bilayer. His-23 provides a ligand contact to heme.

Belongs to the PsbE/PsbF family. Heterodimer of an alpha subunit and a beta subunit. PSII is composed of 1 copy each of membrane proteins PsbA, PsbB, PsbC, PsbD, PsbE, PsbF, PsbH, PsbI, PsbJ, PsbK, PsbL, PsbM, PsbT, PsbX, PsbY, PsbZ, Psb30/Ycf12, at least 3 peripheral proteins of the oxygen-evolving complex and a large number of cofactors. It forms dimeric complexes. Heme b is required as a cofactor.

The protein resides in the plastid. It is found in the chloroplast thylakoid membrane. Its function is as follows. This b-type cytochrome is tightly associated with the reaction center of photosystem II (PSII). PSII is a light-driven water:plastoquinone oxidoreductase that uses light energy to abstract electrons from H(2)O, generating O(2) and a proton gradient subsequently used for ATP formation. It consists of a core antenna complex that captures photons, and an electron transfer chain that converts photonic excitation into a charge separation. In Marchantia polymorpha (Common liverwort), this protein is Cytochrome b559 subunit alpha.